The primary structure comprises 378 residues: 7-methylxanthine methyltransferase 1 (378 aa).

Positions 18, 61, 66, 100, 101, 139, 140, and 156 each coordinate S-adenosyl-L-homocysteine. The theobromine site is built by Tyr157, His160, and Trp161. The Mg(2+) site is built by Asn178, Asp260, Phe262, and Asn263. Residue Tyr362 coordinates theobromine.

It belongs to the methyltransferase superfamily. Type-7 methyltransferase family. The cofactor is Mg(2+). In terms of tissue distribution, mainly expressed, at low levels, in leaves and fruits (grains). Also present, at lower levels, in roots, stamens and pistils.

The protein localises to the cytoplasm. It catalyses the reaction 7-methylxanthine + S-adenosyl-L-methionine = theobromine + S-adenosyl-L-homocysteine + H(+). It participates in alkaloid biosynthesis. Involved in the biosynthesis of caffeine. Catalyzes the conversion of 7-methylxanthine (7mX) to theobromine and of paraxanthine to caffeine. This chain is 7-methylxanthine methyltransferase 1, found in Coffea canephora (Robusta coffee).